We begin with the raw amino-acid sequence, 94 residues long: HssA/B-like protein 49 (94 aa).

The segment at 1–20 is disordered; the sequence is MTLFSSISSISNPMTSSKSS.

Belongs to the hssA/B family.

In Dictyostelium discoideum (Social amoeba), this protein is HssA/B-like protein 49 (hssl49).